A 252-amino-acid chain; its full sequence is Probable transcriptional regulatory protein CE1776 (252 aa).

The disordered stretch occupies residues 1–22; the sequence is MAGHSKWATTKHKKAANDAKRG.

Belongs to the TACO1 family.

Its subcellular location is the cytoplasm. The sequence is that of Probable transcriptional regulatory protein CE1776 from Corynebacterium efficiens (strain DSM 44549 / YS-314 / AJ 12310 / JCM 11189 / NBRC 100395).